Here is a 442-residue protein sequence, read N- to C-terminus: Transcription factor MYCFIDRAFT_198930 (442 aa).

The interval 1–34 (MSTTPMAAPPGADLKPVTSSRGRSSTSDEQKLRS) is disordered. The zn(2)-C6 fungal-type DNA-binding region spans 36-63 (CESCAQSKLKCSGDKPACARCAKRGLAC). Residues 74–107 (KPKGYTSTNDNNPSKRREDSHSPAASQWSSTGHL) form a disordered region. Polar residues predominate over residues 96–107 (PAASQWSSTGHL).

Its subcellular location is the nucleus. In terms of biological role, transcription factor that positively regulates the expression of the gene cluster that mediates the biosynthesis of an emodin derivative that may be involved in black Sigatoka disease of banana. This is Transcription factor MYCFIDRAFT_198930 from Pseudocercospora fijiensis (strain CIRAD86) (Black leaf streak disease fungus).